The chain runs to 341 residues: 2-dehydro-3-deoxy-L-galactonate 5-dehydrogenase (341 aa).

Residue Cys-37 coordinates Zn(2+). Residues Thr-39 and His-42 each act as charge relay system in the active site. The Zn(2+) site is built by His-60, Glu-61, Cys-90, Cys-93, Cys-96, and Cys-104.

It belongs to the zinc-containing alcohol dehydrogenase family. It depends on Zn(2+) as a cofactor.

The catalysed reaction is 2-dehydro-3-deoxy-L-galactonate + NAD(+) = 3-deoxy-D-glycero-2,5-hexodiulosonate + NADH + H(+). Functionally, involved in the degradation of 3,6-anhydro-L-galactose, which is the major monomeric sugar of red macroalgae. Catalyzes the third step of the pathway, the NAD(+)-dependent oxidation of 2-dehydro-3-deoxy-L-galactonate (L-KDGal) to 3-deoxy-D-glycero-2,5-hexodiulosonate (L-DDGal). In Pseudoalteromonas atlantica (strain T6c / ATCC BAA-1087), this protein is 2-dehydro-3-deoxy-L-galactonate 5-dehydrogenase.